A 384-amino-acid chain; its full sequence is Glucans biosynthesis protein C (384 aa).

10 helical membrane passes run 17–37, 54–74, 91–111, 140–160, 173–193, 212–232, 240–260, 274–294, 311–331, and 338–358; these read AWLMLLGIPFHISLIYSTHSW, FIHAFRMQVFFVISGYFSYML, VGIPMLTAIPLLTLPQFILLQ, LWFLLVLVILTTVSIGIFTWF, AISLAKLSLIFFLLGVAYAAI, FIVMQTLFYVPFFILGALAFI, FTTPSRGCTLGAAVAFIAYLL, TESVITMVMGLWMVNVVFSLG, ASLFIYLVHHPLTLFFGAYIT, and LIGFLCGLIFVMGIALILYEI.

Belongs to the acyltransferase 3 family. OpgC subfamily.

Its subcellular location is the cell membrane. The protein operates within glycan metabolism; osmoregulated periplasmic glucan (OPG) biosynthesis. Functionally, necessary for the succinyl substitution of periplasmic glucans. Could catalyze the transfer of succinyl residues from the cytoplasmic side of the membrane to the nascent glucan backbones on the periplasmic side of the membrane. The polypeptide is Glucans biosynthesis protein C (Salmonella typhimurium (strain LT2 / SGSC1412 / ATCC 700720)).